A 510-amino-acid chain; its full sequence is Glycerol kinase (510 aa).

T12 serves as a coordination point for ADP. Residues T12, T13, and S14 each contribute to the ATP site. A sn-glycerol 3-phosphate-binding site is contributed by T12. Residue R16 coordinates ADP. R82, E83, and Y134 together coordinate sn-glycerol 3-phosphate. Glycerol is bound by residues R82, E83, and Y134. The residue at position 230 (H230) is a Phosphohistidine; by HPr. Residue D244 participates in sn-glycerol 3-phosphate binding. D244 and Q245 together coordinate glycerol. T266 and G309 together coordinate ADP. ATP is bound by residues T266, G309, Q313, and G410. Positions 410 and 414 each coordinate ADP.

Belongs to the FGGY kinase family. In terms of assembly, homotetramer and homodimer (in equilibrium). Post-translationally, the phosphoenolpyruvate-dependent sugar phosphotransferase system (PTS), including enzyme I, and histidine-containing protein (HPr) are required for the phosphorylation, which leads to the activation of the enzyme.

It catalyses the reaction glycerol + ATP = sn-glycerol 3-phosphate + ADP + H(+). It functions in the pathway polyol metabolism; glycerol degradation via glycerol kinase pathway; sn-glycerol 3-phosphate from glycerol: step 1/1. Its activity is regulated as follows. Activated by phosphorylation and inhibited by fructose 1,6-bisphosphate (FBP). Its function is as follows. Key enzyme in the regulation of glycerol uptake and metabolism. Catalyzes the phosphorylation of glycerol to yield sn-glycerol 3-phosphate. The chain is Glycerol kinase from Bacillus cereus (strain ATCC 10987 / NRS 248).